The chain runs to 436 residues: Histidine--tRNA ligase (436 aa).

The protein belongs to the class-II aminoacyl-tRNA synthetase family. Homodimer.

It is found in the cytoplasm. The enzyme catalyses tRNA(His) + L-histidine + ATP = L-histidyl-tRNA(His) + AMP + diphosphate + H(+). This Prochlorococcus marinus (strain MIT 9313) protein is Histidine--tRNA ligase.